The chain runs to 112 residues: MREPDRTPIQRRDILTGKLKQDSGGESRFLHISSAIVTARPDRAADLARHFATLPGTEVHAVQGAKIVLVLEGASVGEIRQPHGAISVMEGVFSANLVFEQILPADEREALS.

It belongs to the NapD family. As to quaternary structure, interacts with the cytoplasmic NapA precursor.

The protein resides in the cytoplasm. Its function is as follows. Chaperone for NapA, the catalytic subunit of the periplasmic nitrate reductase. It binds directly and specifically to the twin-arginine signal peptide of NapA, preventing premature interaction with the Tat translocase and premature export. The chain is Chaperone NapD from Paracoccus pantotrophus (Thiosphaera pantotropha).